Consider the following 38-residue polypeptide: Kunitz-type trypsin inhibitor beta chain (38 aa).

It belongs to the protease inhibitor I3 (leguminous Kunitz-type inhibitor) family. In terms of assembly, heterodimer of an alpha and a beta chain linked by a disulfide bond.

Inhibition of trypsin. This is Kunitz-type trypsin inhibitor beta chain from Neltuma juliflora (Mesquite).